The chain runs to 449 residues: Probable phosphoglucosamine mutase (449 aa).

Catalysis depends on Ser96, which acts as the Phosphoserine intermediate. The Mg(2+) site is built by Ser96, Asp233, Asp235, and Asp237. Ser96 is subject to Phosphoserine.

This sequence belongs to the phosphohexose mutase family. Requires Mg(2+) as cofactor. In terms of processing, activated by phosphorylation.

It catalyses the reaction alpha-D-glucosamine 1-phosphate = D-glucosamine 6-phosphate. Functionally, catalyzes the conversion of glucosamine-6-phosphate to glucosamine-1-phosphate. Does not display phosphoglucomutase (PGM) or phosphomannomutase (PMM) activities. In Thermococcus kodakarensis (strain ATCC BAA-918 / JCM 12380 / KOD1) (Pyrococcus kodakaraensis (strain KOD1)), this protein is Probable phosphoglucosamine mutase (glmM).